Here is a 181-residue protein sequence, read N- to C-terminus: Acetylcholinesterase (181 aa).

The active-site Acyl-ester intermediate is S76. E132 serves as the catalytic Charge relay system. Residues 162–181 (WQDQDNGGLPLTGNPTXPHN) are disordered.

Belongs to the type-B carboxylesterase/lipase family. The N-terminus is blocked. In terms of tissue distribution, expressed by the venom gland. Is also probably expressed by liver and muscle.

Its subcellular location is the synapse. It localises to the secreted. The protein localises to the cell membrane. It carries out the reaction acetylcholine + H2O = choline + acetate + H(+). Functionally, in venom, its toxic role is unclear: it could result in less musculatory control by rapidly hydrolyzing acetylcholine, or that it works synergistically with alkaline phosphatase (ALP) in paralyzing prey through hypotension. In muscle, it terminates signal transduction at the neuromuscular junction by rapid hydrolysis of the acetylcholine released into the synaptic cleft. In liver, its function is unclear: it could serve as a safeguard against any diffusion of acetylcholine from synapses into the circulation. The sequence is that of Acetylcholinesterase (ACHE) from Naja oxiana (Central Asian cobra).